A 384-amino-acid polypeptide reads, in one-letter code: Endoglucanase (384 aa).

The signal sequence occupies residues 1 to 25 (MTRRRLLHAGTLAGVAALLPAAALA). E63 serves as the catalytic Proton donor. The active-site Nucleophile is D124.

This sequence belongs to the glycosyl hydrolase 8 (cellulase D) family.

The protein resides in the secreted. It catalyses the reaction Endohydrolysis of (1-&gt;4)-beta-D-glucosidic linkages in cellulose, lichenin and cereal beta-D-glucans.. The protein operates within glycan metabolism; bacterial cellulose biosynthesis. Functionally, hydrolyzes carboxymethylcellulose. This is Endoglucanase (bcsZ) from Xanthomonas axonopodis pv. citri (strain 306).